The primary structure comprises 65 residues: Peptide ToAcP (65 aa).

A signal peptide spans 1-24 (MKMKMIVVISILLIVFSLSSKAMS). A propeptide spanning residues 25–34 (LEDEQESVQR) is cleaved from the precursor. The residue at position 58 (alanine 58) is an Alanine amide. A propeptide spanning residues 59–65 (GRFDPAV) is cleaved from the precursor.

As to expression, expressed by the venom gland.

It is found in the secreted. Its function is as follows. Helical wheel projections predict no hydrophobic face, suggesting a non-amphipathic peptide. Does not show antifungal activity. The polypeptide is Peptide ToAcP (Tityus obscurus (Amazonian scorpion)).